Reading from the N-terminus, the 596-residue chain is Transcription factor EGL1 (596 aa).

The bHLH domain maps to glutamate 401–leucine 450.

Efficient DNA binding requires dimerization with another bHLH protein. Homodimer and heterodimer with GL3. Interacts with CPC, MYB0/GL1, MYB5, MYB23, MYB113, MYB114, MYB75/PAP1, MYB90/PAP2, TT2, TRY, TTG1 and MYB66/WER. Ubiquitous with higher levels in buds and flowers. Specifically localized in developing root hair cells. Expressed in epidermal root hair cells (trichoblasts) and moves to root hairless cells (atrichoblasts) by a cell-to-cell movement through plasmodesmata (at protein level).

The protein resides in the nucleus. Transcription activator, when associated with MYB75/PAP1, MYB90/PAP2 or TT2. Involved in epidermal cell fate specification. Negatively regulates stomata formation but promotes trichome formation. Together with MYB66/WER, promotes the formation of non-hair cells in root epidermis cells in the N position. Whereas together with CPC, promotes the formation of hair cells in root epidermis cells in the H position by inhibiting non-hair cell formation. Also seems to play a role in the activation of anthocyanin biosynthesis, probably together with MYB75/PAP1. Involved in seed mucilage production. Activates the transcription of GL2. This Arabidopsis thaliana (Mouse-ear cress) protein is Transcription factor EGL1 (BHLH2).